The chain runs to 510 residues: ATP synthase subunit alpha (510 aa).

An ATP-binding site is contributed by 169–176 (GDRQTGKS).

The protein belongs to the ATPase alpha/beta chains family. As to quaternary structure, F-type ATPases have 2 components, CF(1) - the catalytic core - and CF(0) - the membrane proton channel. CF(1) has five subunits: alpha(3), beta(3), gamma(1), delta(1), epsilon(1). CF(0) has three main subunits: a(1), b(2) and c(9-12). The alpha and beta chains form an alternating ring which encloses part of the gamma chain. CF(1) is attached to CF(0) by a central stalk formed by the gamma and epsilon chains, while a peripheral stalk is formed by the delta and b chains.

The protein localises to the cell membrane. The enzyme catalyses ATP + H2O + 4 H(+)(in) = ADP + phosphate + 5 H(+)(out). Its function is as follows. Produces ATP from ADP in the presence of a proton gradient across the membrane. The alpha chain is a regulatory subunit. This chain is ATP synthase subunit alpha, found in Wigglesworthia glossinidia brevipalpis.